The following is a 149-amino-acid chain: D-aminoacyl-tRNA deacylase (149 aa).

The Gly-cisPro motif, important for rejection of L-amino acids motif lies at 137–138 (GP).

This sequence belongs to the DTD family. In terms of assembly, homodimer.

Its subcellular location is the cytoplasm. The catalysed reaction is glycyl-tRNA(Ala) + H2O = tRNA(Ala) + glycine + H(+). It carries out the reaction a D-aminoacyl-tRNA + H2O = a tRNA + a D-alpha-amino acid + H(+). Functionally, an aminoacyl-tRNA editing enzyme that deacylates mischarged D-aminoacyl-tRNAs. Also deacylates mischarged glycyl-tRNA(Ala), protecting cells against glycine mischarging by AlaRS. Acts via tRNA-based rather than protein-based catalysis; rejects L-amino acids rather than detecting D-amino acids in the active site. By recycling D-aminoacyl-tRNA to D-amino acids and free tRNA molecules, this enzyme counteracts the toxicity associated with the formation of D-aminoacyl-tRNA entities in vivo and helps enforce protein L-homochirality. This chain is D-aminoacyl-tRNA deacylase, found in Pediococcus pentosaceus (strain ATCC 25745 / CCUG 21536 / LMG 10740 / 183-1w).